A 376-amino-acid polypeptide reads, in one-letter code: Formate dehydrogenase 1 (376 aa).

Positions 97 and 121 each coordinate substrate. NAD(+)-binding positions include 176 to 177 (RI), Asp197, 244 to 248 (PLHKD), Thr270, Asp296, and 325 to 328 (HISG).

It belongs to the D-isomer specific 2-hydroxyacid dehydrogenase family. FDH subfamily. As to quaternary structure, homodimer.

It localises to the cytoplasm. It carries out the reaction formate + NAD(+) = CO2 + NADH. Catalyzes the NAD(+)-dependent oxidation of formate to carbon dioxide. Formate oxidation is the final step in the methanol oxidation pathway in methylotrophic microorganisms. Has a role in the detoxification of exogenous formate in non-methylotrophic organisms. In Saccharomyces cerevisiae (strain YJM789) (Baker's yeast), this protein is Formate dehydrogenase 1 (FDH1).